Here is a 517-residue protein sequence, read N- to C-terminus: Probable G-protein coupled receptor Mth-like 4 (517 aa).

A signal peptide spans M1–A18. Topologically, residues E19–K212 are extracellular. Disulfide bonds link C23–C77, C79–C84, C88–C183, C89–C100, and C145–C201. An N-linked (GlcNAc...) asparagine glycan is attached at N39. N117 and N165 each carry an N-linked (GlcNAc...) asparagine glycan. A helical transmembrane segment spans residues T213 to V233. Over E234–K242 the chain is Cytoplasmic. The chain crosses the membrane as a helical span at residues C243–W263. Residues K264–T272 lie on the Extracellular side of the membrane. A helical membrane pass occupies residues A273–I293. Topologically, residues H294 to N319 are cytoplasmic. Residues L320–V340 traverse the membrane as a helical segment. Topologically, residues K341–T363 are extracellular. A helical membrane pass occupies residues V364 to V384. The Cytoplasmic segment spans residues L385–Q414. The helical transmembrane segment at M415–L435 threads the bilayer. Over S436–Q459 the chain is Extracellular. A glycan (N-linked (GlcNAc...) asparagine) is linked at N456. A helical membrane pass occupies residues G460–G480. Residues G481–C517 are Cytoplasmic-facing.

Belongs to the G-protein coupled receptor 2 family. Mth subfamily.

It localises to the cell membrane. The protein is Probable G-protein coupled receptor Mth-like 4 (mthl4) of Drosophila melanogaster (Fruit fly).